A 105-amino-acid polypeptide reads, in one-letter code: Large ribosomal subunit protein uL24 (105 aa).

It belongs to the universal ribosomal protein uL24 family. In terms of assembly, part of the 50S ribosomal subunit.

Its function is as follows. One of two assembly initiator proteins, it binds directly to the 5'-end of the 23S rRNA, where it nucleates assembly of the 50S subunit. In terms of biological role, one of the proteins that surrounds the polypeptide exit tunnel on the outside of the subunit. This chain is Large ribosomal subunit protein uL24, found in Novosphingobium aromaticivorans (strain ATCC 700278 / DSM 12444 / CCUG 56034 / CIP 105152 / NBRC 16084 / F199).